We begin with the raw amino-acid sequence, 116 residues long: NADH-ubiquinone oxidoreductase chain 3 (116 aa).

Helical transmembrane passes span L3 to F23, F56 to L76, and A84 to I104.

It belongs to the complex I subunit 3 family.

Its subcellular location is the mitochondrion membrane. It catalyses the reaction a ubiquinone + NADH + 5 H(+)(in) = a ubiquinol + NAD(+) + 4 H(+)(out). Functionally, core subunit of the mitochondrial membrane respiratory chain NADH dehydrogenase (Complex I) that is believed to belong to the minimal assembly required for catalysis. Complex I functions in the transfer of electrons from NADH to the respiratory chain. The immediate electron acceptor for the enzyme is believed to be ubiquinone. This chain is NADH-ubiquinone oxidoreductase chain 3 (MT-ND3), found in Oncorhynchus nerka (Sockeye salmon).